Here is a 147-residue protein sequence, read N- to C-terminus: Hemoglobin subunit beta (147 aa).

An N-acetylvaline modification is found at valine 2. Residues 3–147 (HLTGEEKAAV…VANALAHKYH (145 aa)) form the Globin domain. Threonine 13 is modified (phosphothreonine). Serine 45 carries the phosphoserine modification. The residue at position 60 (lysine 60) is an N6-acetyllysine. Histidine 64 provides a ligand contact to heme b. Lysine 83 is subject to N6-acetyllysine. Position 93 (histidine 93) interacts with heme b. An S-nitrosocysteine modification is found at cysteine 94. Lysine 145 is modified (N6-acetyllysine).

It belongs to the globin family. As to quaternary structure, heterotetramer of two alpha chains and two beta chains. Red blood cells.

Its function is as follows. Involved in oxygen transport from the lung to the various peripheral tissues. The protein is Hemoglobin subunit beta (HBB) of Cheracebus torquatus (Collared titi monkey).